A 342-amino-acid polypeptide reads, in one-letter code: Ribosomal RNA small subunit methyltransferase C (342 aa).

Belongs to the methyltransferase superfamily. RsmC family. As to quaternary structure, monomer.

It is found in the cytoplasm. The catalysed reaction is guanosine(1207) in 16S rRNA + S-adenosyl-L-methionine = N(2)-methylguanosine(1207) in 16S rRNA + S-adenosyl-L-homocysteine + H(+). Its function is as follows. Specifically methylates the guanine in position 1207 of 16S rRNA in the 30S particle. The chain is Ribosomal RNA small subunit methyltransferase C from Aeromonas hydrophila subsp. hydrophila (strain ATCC 7966 / DSM 30187 / BCRC 13018 / CCUG 14551 / JCM 1027 / KCTC 2358 / NCIMB 9240 / NCTC 8049).